Consider the following 379-residue polypeptide: MAPNIRKSHPLLKIINNSLIDLPSPSNISAWWNFGSLLGICLITQILTGLLLAMHYTADTTLAFSSVAHTCRNVQYGWFIRNLHANGASFFFICIYLHIGRGLYYGSYLYKETWNTGVILLLTLMATAFVGYVLPWGQMSFWGATVITNLFSAIPYIGQTLVEWAWGGFSVDNPTLTRFFALHFLLPFVIAGITLVHLTFLHESGSNNPLGIISHCDKIPFHPYFSLKDILGFTLMFIPLLSLAFFSPNLLGDPENFTPANPLATPPHIKPEWYFLFAYAILRSIPNKLGGVLALAASVLILFLIPLLHKSKQRSMTFRPLSQLLFWFLVANLLILTWIGSQPVEHPFIIIGQVASFTYFLILLVLFPAIAALENKMIY.

The next 4 membrane-spanning stretches (helical) occupy residues 34–54, 78–99, 114–134, and 179–199; these read FGSLLGICLITQILTGLLLAM, WFIRNLHANGASFFFICIYLHI, WNTGVILLLTLMATAFVGYVL, and FFALHFLLPFVIAGITLVHLT. Positions 84 and 98 each coordinate heme b. Heme b contacts are provided by histidine 183 and histidine 197. Histidine 202 provides a ligand contact to a ubiquinone. 4 helical membrane-spanning segments follow: residues 227–247, 289–309, 321–341, and 348–368; these read LKDILGFTLMFIPLLSLAFFS, LGGVLALAASVLILFLIPLLH, LSQLLFWFLVANLLILTWIGS, and FIIIGQVASFTYFLILLVLFP.

It belongs to the cytochrome b family. As to quaternary structure, the cytochrome bc1 complex contains 11 subunits: 3 respiratory subunits (MT-CYB, CYC1 and UQCRFS1), 2 core proteins (UQCRC1 and UQCRC2) and 6 low-molecular weight proteins (UQCRH/QCR6, UQCRB/QCR7, UQCRQ/QCR8, UQCR10/QCR9, UQCR11/QCR10 and a cleavage product of UQCRFS1). This cytochrome bc1 complex then forms a dimer. Heme b is required as a cofactor.

It is found in the mitochondrion inner membrane. In terms of biological role, component of the ubiquinol-cytochrome c reductase complex (complex III or cytochrome b-c1 complex) that is part of the mitochondrial respiratory chain. The b-c1 complex mediates electron transfer from ubiquinol to cytochrome c. Contributes to the generation of a proton gradient across the mitochondrial membrane that is then used for ATP synthesis. In Struthio camelus (Common ostrich), this protein is Cytochrome b (MT-CYB).